The chain runs to 237 residues: MISAQACGANGKMKDYHYSGPVEHKFSPYAFNGGTVLAVAGEDFALVASDTRLSEGYSIHSRDSPKCYKLTDTTVIGCSGFHGDCLTLTKIIEARLKMYKHSNNKSMTSGAIAAMLSTILYGRRFFPYYVYNIIGGLDEEGRGAVYSFDPVGSYQRDTYKAGGSASAMLQPLLDNQIGFKNMENVEQVPLSQEKAVQLVKDVFISAAERDVYTGDALKICIITKEGIREEIVPLRKD.

Belongs to the peptidase T1B family. As to quaternary structure, the 26S proteasome consists of a 20S proteasome core and two 19S regulatory subunits. The 20S proteasome core is composed of 28 subunits that are arranged in four stacked rings, resulting in a barrel-shaped structure. The two end rings are each formed by seven alpha subunits, and the two central rings are each formed by seven beta subunits. The catalytic chamber with the active sites is on the inside of the barrel.

It localises to the cytoplasm. Its subcellular location is the nucleus. Functionally, non-catalytic component of the proteasome, a multicatalytic proteinase complex which is characterized by its ability to cleave peptides with Arg, Phe, Tyr, Leu, and Glu adjacent to the leaving group at neutral or slightly basic pH. The proteasome has an ATP-dependent proteolytic activity. The protein is Proteasome subunit beta type-1-B (psmb1-B) of Carassius auratus (Goldfish).